The chain runs to 208 residues: Protein-L-isoaspartate O-methyltransferase (208 aa).

Ser59 is an active-site residue.

The protein belongs to the methyltransferase superfamily. L-isoaspartyl/D-aspartyl protein methyltransferase family.

The protein localises to the cytoplasm. It carries out the reaction [protein]-L-isoaspartate + S-adenosyl-L-methionine = [protein]-L-isoaspartate alpha-methyl ester + S-adenosyl-L-homocysteine. Its function is as follows. Catalyzes the methyl esterification of L-isoaspartyl residues in peptides and proteins that result from spontaneous decomposition of normal L-aspartyl and L-asparaginyl residues. It plays a role in the repair and/or degradation of damaged proteins. In Vibrio parahaemolyticus serotype O3:K6 (strain RIMD 2210633), this protein is Protein-L-isoaspartate O-methyltransferase.